Here is a 490-residue protein sequence, read N- to C-terminus: Glutamate--tRNA ligase (490 aa).

Positions 9-19 (PSPTGLQHIGG) match the 'HIGH' region motif. The short motif at 251-255 (KLSKR) is the 'KMSKS' region element. K254 contributes to the ATP binding site.

This sequence belongs to the class-I aminoacyl-tRNA synthetase family. Glutamate--tRNA ligase type 1 subfamily. Monomer.

The protein resides in the cytoplasm. It catalyses the reaction tRNA(Glu) + L-glutamate + ATP = L-glutamyl-tRNA(Glu) + AMP + diphosphate. Its function is as follows. Catalyzes the attachment of glutamate to tRNA(Glu) in a two-step reaction: glutamate is first activated by ATP to form Glu-AMP and then transferred to the acceptor end of tRNA(Glu). The protein is Glutamate--tRNA ligase of Borreliella afzelii (strain PKo) (Borrelia afzelii).